Consider the following 187-residue polypeptide: Large ribosomal subunit protein uL5 (187 aa).

The protein belongs to the universal ribosomal protein uL5 family. As to quaternary structure, part of the 50S ribosomal subunit; part of the 5S rRNA/L5/L18/L25 subcomplex. Contacts the 5S rRNA and the P site tRNA. Forms a bridge to the 30S subunit in the 70S ribosome.

Its function is as follows. This is one of the proteins that bind and probably mediate the attachment of the 5S RNA into the large ribosomal subunit, where it forms part of the central protuberance. In the 70S ribosome it contacts protein S13 of the 30S subunit (bridge B1b), connecting the 2 subunits; this bridge is implicated in subunit movement. Contacts the P site tRNA; the 5S rRNA and some of its associated proteins might help stabilize positioning of ribosome-bound tRNAs. This chain is Large ribosomal subunit protein uL5, found in Brachyspira hyodysenteriae (strain ATCC 49526 / WA1).